The primary structure comprises 108 residues: Thioredoxin (108 aa).

Residues 2-108 (SEHIVNVTDA…QLAAFLDANI (107 aa)) form the Thioredoxin domain. Cysteine 33 and cysteine 36 are oxidised to a cystine.

Belongs to the thioredoxin family.

Functionally, participates in various redox reactions through the reversible oxidation of its active center dithiol to a disulfide and catalyzes dithiol-disulfide exchange reactions. This is Thioredoxin (trxA) from Pseudomonas aeruginosa (strain ATCC 15692 / DSM 22644 / CIP 104116 / JCM 14847 / LMG 12228 / 1C / PRS 101 / PAO1).